The following is a 431-amino-acid chain: MKKNINLRSLAAQAIEQVVEKGQSLSNVLPPLQQKVSDKDKALLQELCFGVLRTLSQLEWLISKLMARPMTGKQRTVHFLIMVGLYQLLYTRIPPHAALAETVEGAVAIKRPQLKGLINGVLRQFQRQQEALLAEFAEHENRYLHPKWLLKRLQQAWPEQWQEIVEANNQRPPMWLRVNRNHHSRDEWLALLNEAGLEGFTHPDYPDAVRLATPAPVHALPGFAEGWVTVQDASAQGCMRYLQPENGERILDLCAAPGGKTTHILEVAPQAQVMAVDIDEQRLSRVYDNLKRLGVKAEVKQGDGRFPEQWCGNEQFDRILLDAPCSATGVIRRHPDIKWLRRDRDIAELAQLQAEILNAIWGHLKPGGTLVYATCSILPEENSQQIAAFLARTPDAELHATGTPASPGQQNLPGVEEGDGFFYAKLIKRRN.

Residues 254–260 (CAAPGGK), Asp277, Asp303, and Asp322 contribute to the S-adenosyl-L-methionine site. Cys375 (nucleophile) is an active-site residue.

It belongs to the class I-like SAM-binding methyltransferase superfamily. RsmB/NOP family.

Its subcellular location is the cytoplasm. It carries out the reaction cytidine(967) in 16S rRNA + S-adenosyl-L-methionine = 5-methylcytidine(967) in 16S rRNA + S-adenosyl-L-homocysteine + H(+). Specifically methylates the cytosine at position 967 (m5C967) of 16S rRNA. The sequence is that of Ribosomal RNA small subunit methyltransferase B from Klebsiella pneumoniae subsp. pneumoniae (strain ATCC 700721 / MGH 78578).